Consider the following 433-residue polypeptide: Signal recognition particle 54 kDa protein (433 aa).

Residues 106–113, 186–190, and 244–247 each bind GTP; these read GVEGSGKT, DTAGR, and TKMD.

It belongs to the GTP-binding SRP family. SRP54 subfamily. As to quaternary structure, part of the signal recognition particle protein translocation system, which is composed of SRP and FtsY. Archaeal SRP consists of a 7S RNA molecule of 300 nucleotides and two protein subunits: SRP54 and SRP19.

The protein localises to the cytoplasm. It carries out the reaction GTP + H2O = GDP + phosphate + H(+). Its function is as follows. Involved in targeting and insertion of nascent membrane proteins into the cytoplasmic membrane. Binds to the hydrophobic signal sequence of the ribosome-nascent chain (RNC) as it emerges from the ribosomes. The SRP-RNC complex is then targeted to the cytoplasmic membrane where it interacts with the SRP receptor FtsY. The chain is Signal recognition particle 54 kDa protein from Pyrobaculum arsenaticum (strain DSM 13514 / JCM 11321 / PZ6).